An 807-amino-acid chain; its full sequence is Glycerol-3-phosphate acyltransferase (807 aa).

The HXXXXD motif signature appears at Cys-309 to Met-314.

Belongs to the GPAT/DAPAT family.

It localises to the cell inner membrane. It carries out the reaction sn-glycerol 3-phosphate + an acyl-CoA = a 1-acyl-sn-glycero-3-phosphate + CoA. It functions in the pathway phospholipid metabolism; CDP-diacylglycerol biosynthesis; CDP-diacylglycerol from sn-glycerol 3-phosphate: step 1/3. The protein is Glycerol-3-phosphate acyltransferase of Aeromonas hydrophila subsp. hydrophila (strain ATCC 7966 / DSM 30187 / BCRC 13018 / CCUG 14551 / JCM 1027 / KCTC 2358 / NCIMB 9240 / NCTC 8049).